Consider the following 396-residue polypeptide: MAKEKFERTKPHVNVGTIGHVDHGKTTLTAAITTVLTKKFGGEAKAYDQIDAAPEEKARGITINTAHVEYETANRHYAHVDCPGHADYVKNMITGAAQMDGAILVCSAADGPMPQTREHILLARQVGVPYIIVFLNKCDMVDDAELLELVEMEVRELLSKYDFPGDDTPIVKGSAKLALEGDTGELGEVAIMNLADALDTYIPTPERAVDGAFLMPVEDVFSISGRGTVVTGRVERGIVKVGEEIEIVGIKPTVKTTCTGVEMFRKLLDQGQAGDNVGILLRGTKREDVERGQVLAKPGSITPHTHFTAEVYVLSKDEGGRHTPFFNNYRPQFYFRTTDVTGSIELPKDKEMVMPGDNVSITVKLIAPIAMEEGLRFAIREGGRTVGAGVVAKIIE.

Residues 10-206 (KPHVNVGTIG…ALDTYIPTPE (197 aa)) form the tr-type G domain. Positions 19–26 (GHVDHGKT) are G1. 19–26 (GHVDHGKT) is a binding site for GTP. A Mg(2+)-binding site is contributed by T26. Positions 60 to 64 (GITIN) are G2. A G3 region spans residues 81-84 (DCPG). GTP-binding positions include 81 to 85 (DCPGH) and 136 to 139 (NKCD). The G4 stretch occupies residues 136–139 (NKCD). Residues 174 to 176 (SAK) form a G5 region.

This sequence belongs to the TRAFAC class translation factor GTPase superfamily. Classic translation factor GTPase family. EF-Tu/EF-1A subfamily. Monomer.

The protein resides in the cytoplasm. It carries out the reaction GTP + H2O = GDP + phosphate + H(+). Functionally, GTP hydrolase that promotes the GTP-dependent binding of aminoacyl-tRNA to the A-site of ribosomes during protein biosynthesis. The chain is Elongation factor Tu from Burkholderia vietnamiensis (strain G4 / LMG 22486) (Burkholderia cepacia (strain R1808)).